Here is an 84-residue protein sequence, read N- to C-terminus: Exodeoxyribonuclease 7 small subunit (84 aa).

Belongs to the XseB family. As to quaternary structure, heterooligomer composed of large and small subunits.

Its subcellular location is the cytoplasm. The catalysed reaction is Exonucleolytic cleavage in either 5'- to 3'- or 3'- to 5'-direction to yield nucleoside 5'-phosphates.. Functionally, bidirectionally degrades single-stranded DNA into large acid-insoluble oligonucleotides, which are then degraded further into small acid-soluble oligonucleotides. The chain is Exodeoxyribonuclease 7 small subunit from Caulobacter vibrioides (strain ATCC 19089 / CIP 103742 / CB 15) (Caulobacter crescentus).